The primary structure comprises 149 residues: Transcription antitermination protein NusB (149 aa).

This sequence belongs to the NusB family.

Functionally, involved in transcription antitermination. Required for transcription of ribosomal RNA (rRNA) genes. Binds specifically to the boxA antiterminator sequence of the ribosomal RNA (rrn) operons. In Chromobacterium violaceum (strain ATCC 12472 / DSM 30191 / JCM 1249 / CCUG 213 / NBRC 12614 / NCIMB 9131 / NCTC 9757 / MK), this protein is Transcription antitermination protein NusB.